We begin with the raw amino-acid sequence, 32 residues long: Cathepsin B-like cysteine proteinase (32 aa).

The propeptide at 1–22 (KPNYKRQFEPFSDELIHYINLE) is activation peptide.

It belongs to the peptidase C1 family.

Thiol protease. The sequence is that of Cathepsin B-like cysteine proteinase from Fasciola hepatica (Liver fluke).